A 250-amino-acid polypeptide reads, in one-letter code: Ribosomal RNA small subunit methyltransferase J (250 aa).

S-adenosyl-L-methionine-binding positions include 102 to 103 (RD), 118 to 119 (ER), 154 to 155 (SS), and Asp172.

The protein belongs to the methyltransferase superfamily. RsmJ family.

The protein resides in the cytoplasm. It catalyses the reaction guanosine(1516) in 16S rRNA + S-adenosyl-L-methionine = N(2)-methylguanosine(1516) in 16S rRNA + S-adenosyl-L-homocysteine + H(+). Its function is as follows. Specifically methylates the guanosine in position 1516 of 16S rRNA. This is Ribosomal RNA small subunit methyltransferase J from Edwardsiella ictaluri (strain 93-146).